Consider the following 674-residue polypeptide: Early transcription factor 70 kDa subunit (674 aa).

A Helicase ATP-binding domain is found at 34–193 (ERSLKEKKSV…KDIVELLTNE (160 aa)). 45–52 (LFHKMGSG) lines the ATP pocket. Positions 135-138 (YDNY) match the DEXH box motif.

The protein belongs to the helicase family. VETF subfamily. As to quaternary structure, heterodimer of a 70 kDa and a 82 kDa subunit. Part of the early transcription complex composed of ETF, RAP94, and the DNA-directed RNA polymerase.

The protein resides in the virion. In terms of biological role, acts with RNA polymerase to initiate transcription from early gene promoters. Is recruited by the RPO-associated protein of 94 kDa (RAP94) to form the early transcription complex, which also contains the core RNA polymerase. ETF heterodimer binds to early gene promoters. This chain is Early transcription factor 70 kDa subunit (VETFS), found in Melanoplus sanguinipes entomopoxvirus (MsEPV).